The primary structure comprises 99 residues: Cell division protein FtsB (99 aa).

Residues 1–3 are Cytoplasmic-facing; the sequence is MKF. Residues 4–21 form a helical membrane-spanning segment; it reads FVIALIVLLGLLQYRLWS. Residues 22–99 are Periplasmic-facing; that stretch reads GDNSLPEYFV…GDRSVSSPSQ (78 aa). Positions 31–73 form a coiled coil; that stretch reads VLQKQIAAQQEGNAKLNERNQVLKEEIIDLKSGTEAIEERARN.

The protein belongs to the FtsB family. Part of a complex composed of FtsB, FtsL and FtsQ.

The protein resides in the cell inner membrane. Functionally, essential cell division protein. May link together the upstream cell division proteins, which are predominantly cytoplasmic, with the downstream cell division proteins, which are predominantly periplasmic. This chain is Cell division protein FtsB, found in Shewanella sp. (strain ANA-3).